The chain runs to 324 residues: MRVVIALGGNALLKRGEPMTAEVQRQNIKIAAEAIAPIAAEHQIVVTHGNGPQVGLLALQGSAYKPEEAYPLDILGAETEGMIGYMLEQELGNVLPFEVPLATILTMVEVDGNDPGFQNPTKFVGPVYDASEAGELHQQKGWVFKQDGNKWRRVVASPIPRRIFELRPIQWLLDKGAVVICAGGGGIPTMYERGKERTLIGVEAVIDKDLCSALLARDIEADLLILATDAEAVFTGWGTPERKAIFKTNPRRLGEFSFPAGSMGPKVEAACHFVNATGRVAAIGALADIPAMVRAERGTIISSSFSDITWHVEVPIPGPASRPV.

Belongs to the carbamate kinase family.

The protein resides in the cytoplasm. It catalyses the reaction hydrogencarbonate + NH4(+) + ATP = carbamoyl phosphate + ADP + H2O + H(+). Its pathway is amino-acid degradation; L-arginine degradation via ADI pathway. This Rhizobium meliloti (strain 1021) (Ensifer meliloti) protein is Carbamate kinase.